We begin with the raw amino-acid sequence, 341 residues long: Dihydroorotate dehydrogenase (quinone) (341 aa).

Residues 62-66 (AGMDK) and Thr-86 contribute to the FMN site. A substrate-binding site is contributed by Lys-66. 111 to 115 (NRMGF) is a substrate binding site. FMN is bound by residues Asn-139 and Asn-172. Asn-172 provides a ligand contact to substrate. The active-site Nucleophile is Ser-175. Residue Asn-177 coordinates substrate. Lys-217 and Thr-245 together coordinate FMN. 246–247 (NT) contacts substrate. Residues Gly-268, Gly-297, and 318-319 (YS) contribute to the FMN site.

Belongs to the dihydroorotate dehydrogenase family. Type 2 subfamily. As to quaternary structure, monomer. FMN serves as cofactor.

It is found in the cell membrane. It catalyses the reaction (S)-dihydroorotate + a quinone = orotate + a quinol. It participates in pyrimidine metabolism; UMP biosynthesis via de novo pathway; orotate from (S)-dihydroorotate (quinone route): step 1/1. Functionally, catalyzes the conversion of dihydroorotate to orotate with quinone as electron acceptor. The polypeptide is Dihydroorotate dehydrogenase (quinone) (Shewanella loihica (strain ATCC BAA-1088 / PV-4)).